We begin with the raw amino-acid sequence, 328 residues long: Methionyl-tRNA formyltransferase (328 aa).

Residue 110 to 113 coordinates (6S)-5,6,7,8-tetrahydrofolate; sequence SLLP.

This sequence belongs to the Fmt family.

It catalyses the reaction L-methionyl-tRNA(fMet) + (6R)-10-formyltetrahydrofolate = N-formyl-L-methionyl-tRNA(fMet) + (6S)-5,6,7,8-tetrahydrofolate + H(+). In terms of biological role, attaches a formyl group to the free amino group of methionyl-tRNA(fMet). The formyl group appears to play a dual role in the initiator identity of N-formylmethionyl-tRNA by promoting its recognition by IF2 and preventing the misappropriation of this tRNA by the elongation apparatus. This Prochlorococcus marinus (strain MIT 9215) protein is Methionyl-tRNA formyltransferase.